Here is a 180-residue protein sequence, read N- to C-terminus: Interleukin-17B (180 aa).

A signal peptide spans 1–22 (MDWPHSLLFLLAISIFLAPSHP). A disordered region spans residues 22–44 (PRNTKGKRKGQGRPSPLAPGPHQ). The segment covering 23 to 32 (RNTKGKRKGQ) has biased composition (basic residues). N-linked (GlcNAc...) asparagine glycosylation is present at N75. 2 disulfides stabilise this stretch: C121-C176 and C126-C178.

The protein belongs to the IL-17 family.

It localises to the secreted. Stimulates the release of tumor necrosis factor alpha and IL-1-beta from the monocytic cell line THP-1. In Mus musculus (Mouse), this protein is Interleukin-17B (Il17b).